The sequence spans 133 residues: Small ribosomal subunit protein uS9 (133 aa).

The span at 98–113 shows a compositional bias: basic and acidic residues; it reads RKPLKTEGHLSRDPRA. The interval 98–133 is disordered; that stretch reads RKPLKTEGHLSRDPRAKERRKYGLKKARKAPQFSKR. The segment covering 114–133 has biased composition (basic residues); the sequence is KERRKYGLKKARKAPQFSKR.

It belongs to the universal ribosomal protein uS9 family.

The chain is Small ribosomal subunit protein uS9 from Synechococcus sp. (strain CC9902).